The primary structure comprises 158 residues: Phosphopantetheine adenylyltransferase (158 aa).

Threonine 10 serves as a coordination point for substrate. Residues 10-11 (TF) and histidine 18 each bind ATP. The substrate site is built by lysine 42, leucine 74, and arginine 88. ATP-binding positions include 89–91 (GIR), glutamate 99, and 124–130 (WRYLSST).

Belongs to the bacterial CoaD family. In terms of assembly, homohexamer. It depends on Mg(2+) as a cofactor.

The protein localises to the cytoplasm. It catalyses the reaction (R)-4'-phosphopantetheine + ATP + H(+) = 3'-dephospho-CoA + diphosphate. The protein operates within cofactor biosynthesis; coenzyme A biosynthesis; CoA from (R)-pantothenate: step 4/5. Functionally, reversibly transfers an adenylyl group from ATP to 4'-phosphopantetheine, yielding dephospho-CoA (dPCoA) and pyrophosphate. This is Phosphopantetheine adenylyltransferase from Actinobacillus pleuropneumoniae serotype 7 (strain AP76).